Here is a 581-residue protein sequence, read N- to C-terminus: Kelch-like protein 38 (581 aa).

One can recognise a BTB domain in the interval 34–101 (TDVSICAGAR…VYTGEAHIAT (68 aa)). One can recognise a BACK domain in the interval 136–237 (CLGMIRLSEI…HPAFFHHFIA (102 aa)). 6 Kelch repeats span residues 285–332 (FLIL…TLHR), 334–383 (IYVL…AHKN), 384–431 (FIFS…VKDQ), 433–479 (LYLF…VLGE), 480–521 (RIVI…VMGN), and 523–573 (LYVT…TLQC).

The polypeptide is Kelch-like protein 38 (KLHL38) (Homo sapiens (Human)).